Consider the following 31-residue polypeptide: Photosystem II reaction center protein T (31 aa).

Residues 3–23 (SAAYILVLALALGVIFFAIAF) form a helical membrane-spanning segment.

This sequence belongs to the PsbT family. PSII is composed of 1 copy each of membrane proteins PsbA, PsbB, PsbC, PsbD, PsbE, PsbF, PsbH, PsbI, PsbJ, PsbK, PsbL, PsbM, PsbT, PsbX, PsbY, PsbZ, Psb30/Ycf12, peripheral proteins PsbO, CyanoQ (PsbQ), PsbU, PsbV and a large number of cofactors. It forms dimeric complexes.

It localises to the cellular thylakoid membrane. Its function is as follows. Found at the monomer-monomer interface of the photosystem II (PS II) dimer, plays a role in assembly and dimerization of PSII. PSII is a light-driven water plastoquinone oxidoreductase, using light energy to abstract electrons from H(2)O, generating a proton gradient subsequently used for ATP formation. The polypeptide is Photosystem II reaction center protein T (Trichodesmium erythraeum (strain IMS101)).